The following is an 811-amino-acid chain: Probable glutamine--tRNA ligase (811 aa).

The segment at 190-217 (DAAAGKKKGAKAKNSKQKTVDSGKAKEQ) is disordered. Over residues 194-205 (GKKKGAKAKNSK) the composition is skewed to basic residues. A compositionally biased stretch (basic and acidic residues) spans 207 to 217 (KTVDSGKAKEQ). Positions 269–279 (PEPNGYLHIGH) match the 'HIGH' region motif. ATP contacts are provided by residues 270–272 (EPN) and 276–282 (HIGHSKA). L-glutamine is bound by residues aspartate 302 and tyrosine 447. ATP-binding positions include threonine 466, 495-496 (RL), and 503-505 (MSK). The 'KMSKS' region motif lies at 502–506 (LMSKR).

This sequence belongs to the class-I aminoacyl-tRNA synthetase family.

It is found in the cytoplasm. The catalysed reaction is tRNA(Gln) + L-glutamine + ATP = L-glutaminyl-tRNA(Gln) + AMP + diphosphate. In Schizosaccharomyces pombe (strain 972 / ATCC 24843) (Fission yeast), this protein is Probable glutamine--tRNA ligase (qrs1).